The following is a 155-amino-acid chain: SsrA-binding protein (155 aa).

The protein belongs to the SmpB family.

The protein resides in the cytoplasm. Required for rescue of stalled ribosomes mediated by trans-translation. Binds to transfer-messenger RNA (tmRNA), required for stable association of tmRNA with ribosomes. tmRNA and SmpB together mimic tRNA shape, replacing the anticodon stem-loop with SmpB. tmRNA is encoded by the ssrA gene; the 2 termini fold to resemble tRNA(Ala) and it encodes a 'tag peptide', a short internal open reading frame. During trans-translation Ala-aminoacylated tmRNA acts like a tRNA, entering the A-site of stalled ribosomes, displacing the stalled mRNA. The ribosome then switches to translate the ORF on the tmRNA; the nascent peptide is terminated with the 'tag peptide' encoded by the tmRNA and targeted for degradation. The ribosome is freed to recommence translation, which seems to be the essential function of trans-translation. In Streptococcus suis (strain 98HAH33), this protein is SsrA-binding protein.